Consider the following 238-residue polypeptide: Transcriptional activator HAC1 (238 aa).

Residues 1-39 (MEMTDFELTSNSQSNLAIPTNFKSTLPPRKRAKTKEEKE) are disordered. The span at 7–24 (ELTSNSQSNLAIPTNFKS) shows a compositional bias: polar residues. The bZIP domain maps to 39–102 (EQRRIERILR…LTCSHDAFVA (64 aa)). The basic motif stretch occupies residues 41–61 (RRIERILRNRRAAHQSREKKR). The segment at 67–74 (LERKCSLL) is leucine-zipper. Residues 115 to 152 (GASLDTRASSHSSSDTFTPSPLNCTMEPATLSPKSMRD) are disordered. A compositionally biased stretch (low complexity) spans 117 to 134 (SLDTRASSHSSSDTFTPS).

This sequence belongs to the bZIP family. In terms of assembly, homodimer.

The protein localises to the nucleus. In terms of biological role, transcriptional activator involved in the unfolded protein response (UPR) pathway. Recognizes and binds to the UPR element (UPRE) in the promoter of UPR-regulated genes such as KAR2, PDI1, EUG1 and FKB2. Increases the synthesis of endoplasmic reticulum-resident proteins required for protein folding as well as components of the secretory pathway. The chain is Transcriptional activator HAC1 (HAC1) from Saccharomyces cerevisiae (strain ATCC 204508 / S288c) (Baker's yeast).